Here is a 504-residue protein sequence, read N- to C-terminus: Maturase K (504 aa).

Belongs to the intron maturase 2 family. MatK subfamily.

It is found in the plastid. It localises to the chloroplast. Usually encoded in the trnK tRNA gene intron. Probably assists in splicing its own and other chloroplast group II introns. The protein is Maturase K of Gossypium gossypioides (Mexican cotton).